A 246-amino-acid chain; its full sequence is Uridylate kinase (246 aa).

Residue 20–23 (KISG) coordinates ATP. The tract at residues 28-33 (GDQGYG) is involved in allosteric activation by GTP. Gly-62 is a UMP binding site. Residues Gly-63 and Arg-67 each coordinate ATP. UMP contacts are provided by residues Asp-82 and 143–150 (TGNPYFTT). Residues Thr-170, Tyr-176, and Asp-179 each contribute to the ATP site.

Belongs to the UMP kinase family. Homohexamer.

Its subcellular location is the cytoplasm. It carries out the reaction UMP + ATP = UDP + ADP. It functions in the pathway pyrimidine metabolism; CTP biosynthesis via de novo pathway; UDP from UMP (UMPK route): step 1/1. Its activity is regulated as follows. Allosterically activated by GTP. Inhibited by UTP. Catalyzes the reversible phosphorylation of UMP to UDP. This chain is Uridylate kinase, found in Cereibacter sphaeroides (strain ATCC 17023 / DSM 158 / JCM 6121 / CCUG 31486 / LMG 2827 / NBRC 12203 / NCIMB 8253 / ATH 2.4.1.) (Rhodobacter sphaeroides).